The following is a 187-amino-acid chain: Large ribosomal subunit protein uL5 (187 aa).

It belongs to the universal ribosomal protein uL5 family. As to quaternary structure, part of the 50S ribosomal subunit; part of the 5S rRNA/L5/L18/L25 subcomplex. Contacts the 5S rRNA and the P site tRNA. Forms a bridge to the 30S subunit in the 70S ribosome.

Its function is as follows. This is one of the proteins that bind and probably mediate the attachment of the 5S RNA into the large ribosomal subunit, where it forms part of the central protuberance. In the 70S ribosome it contacts protein S13 of the 30S subunit (bridge B1b), connecting the 2 subunits; this bridge is implicated in subunit movement. Contacts the P site tRNA; the 5S rRNA and some of its associated proteins might help stabilize positioning of ribosome-bound tRNAs. The polypeptide is Large ribosomal subunit protein uL5 (Mycobacterium sp. (strain JLS)).